Here is a 352-residue protein sequence, read N- to C-terminus: Beta-hexosaminidase (352 aa).

Substrate contacts are provided by residues D74, R82, R149, and 179-180 (KH). The active-site Proton donor/acceptor is H192. Catalysis depends on D263, which acts as the Nucleophile.

This sequence belongs to the glycosyl hydrolase 3 family. NagZ subfamily.

It is found in the cytoplasm. The catalysed reaction is Hydrolysis of terminal non-reducing N-acetyl-D-hexosamine residues in N-acetyl-beta-D-hexosaminides.. Its pathway is cell wall biogenesis; peptidoglycan recycling. Its function is as follows. Plays a role in peptidoglycan recycling by cleaving the terminal beta-1,4-linked N-acetylglucosamine (GlcNAc) from peptide-linked peptidoglycan fragments, giving rise to free GlcNAc, anhydro-N-acetylmuramic acid and anhydro-N-acetylmuramic acid-linked peptides. In Bordetella pertussis (strain Tohama I / ATCC BAA-589 / NCTC 13251), this protein is Beta-hexosaminidase.